A 151-amino-acid chain; its full sequence is UPF0756 membrane protein Moth_0120 (151 aa).

The next 4 membrane-spanning stretches (helical) occupy residues 6-26, 52-72, 75-95, and 111-131; these read VILILLMLLGILGRSNVIAAA, AGLIFLVVSVLVPFASGRVAP, MLQSFVSLPGLIAIASGIIAT, and MMIGMVIGSIIGVAFFGGIPV.

It belongs to the UPF0756 family.

Its subcellular location is the cell membrane. This is UPF0756 membrane protein Moth_0120 from Moorella thermoacetica (strain ATCC 39073 / JCM 9320).